Reading from the N-terminus, the 283-residue chain is MKQYLDLVKHVLENGNQKGDRTGTGTKSVFGYQMRFDLSEGFPMVTTKKLHLKSIIYELLWFLKGDTNIKYLKENGVKIWDEWADSNGDLGPVYGHQWRNWNSEEIDQISELITELKTNPNSRRMIVSAWNPSVLPDTKKSFEENVANNKAALPPCHAFFQFYVASPDLEKGETKGKLSCQLYQRSADIFLGVPFNIASYALLTMMIAQVCDLEPGEFIHTFGDAHIYNNHFEQLELQLSREPKPLPKMILNPEIKNIFDFDYDDFTLVDYDPHPAIQGSVAV.

Arg21 is a dUMP binding site. Residue His51 coordinates (6R)-5,10-methylene-5,6,7,8-tetrahydrofolate. A dUMP-binding site is contributed by 123–124; it reads RR. Cys156 serves as the catalytic Nucleophile. DUMP is bound by residues 185-188, Asn196, and 226-228; these read RSAD and HIY. Residue Asp188 participates in (6R)-5,10-methylene-5,6,7,8-tetrahydrofolate binding. Ala282 serves as a coordination point for (6R)-5,10-methylene-5,6,7,8-tetrahydrofolate.

This sequence belongs to the thymidylate synthase family. Bacterial-type ThyA subfamily. Homodimer.

It is found in the cytoplasm. It carries out the reaction dUMP + (6R)-5,10-methylene-5,6,7,8-tetrahydrofolate = 7,8-dihydrofolate + dTMP. The protein operates within pyrimidine metabolism; dTTP biosynthesis. Catalyzes the reductive methylation of 2'-deoxyuridine-5'-monophosphate (dUMP) to 2'-deoxythymidine-5'-monophosphate (dTMP) while utilizing 5,10-methylenetetrahydrofolate (mTHF) as the methyl donor and reductant in the reaction, yielding dihydrofolate (DHF) as a by-product. This enzymatic reaction provides an intracellular de novo source of dTMP, an essential precursor for DNA biosynthesis. The polypeptide is Thymidylate synthase (Flavobacterium johnsoniae (strain ATCC 17061 / DSM 2064 / JCM 8514 / BCRC 14874 / CCUG 350202 / NBRC 14942 / NCIMB 11054 / UW101) (Cytophaga johnsonae)).